Reading from the N-terminus, the 273-residue chain is Large ribosomal subunit protein uL2 (273 aa).

Disordered stretches follow at residues 35-54 (DKKD…TRHI) and 222-273 (GMAM…RRNK). The segment covering 229 to 239 (DHPHGGGEGRN) has biased composition (basic and acidic residues). Over residues 253-273 (KGFKTRKNKRTDKYIVRRRNK) the composition is skewed to basic residues.

Belongs to the universal ribosomal protein uL2 family. Part of the 50S ribosomal subunit. Forms a bridge to the 30S subunit in the 70S ribosome.

One of the primary rRNA binding proteins. Required for association of the 30S and 50S subunits to form the 70S ribosome, for tRNA binding and peptide bond formation. It has been suggested to have peptidyltransferase activity; this is somewhat controversial. Makes several contacts with the 16S rRNA in the 70S ribosome. In Aeromonas hydrophila subsp. hydrophila (strain ATCC 7966 / DSM 30187 / BCRC 13018 / CCUG 14551 / JCM 1027 / KCTC 2358 / NCIMB 9240 / NCTC 8049), this protein is Large ribosomal subunit protein uL2.